The chain runs to 149 residues: Protein-export protein SecB (149 aa).

It belongs to the SecB family. Homotetramer, a dimer of dimers. One homotetramer interacts with 1 SecA dimer.

The protein localises to the cytoplasm. Functionally, one of the proteins required for the normal export of preproteins out of the cell cytoplasm. It is a molecular chaperone that binds to a subset of precursor proteins, maintaining them in a translocation-competent state. It also specifically binds to its receptor SecA. This is Protein-export protein SecB from Acidithiobacillus ferrooxidans (strain ATCC 23270 / DSM 14882 / CIP 104768 / NCIMB 8455) (Ferrobacillus ferrooxidans (strain ATCC 23270)).